An 83-amino-acid polypeptide reads, in one-letter code: Large ribosomal subunit protein bL31B (83 aa).

It belongs to the bacterial ribosomal protein bL31 family. Type B subfamily. Part of the 50S ribosomal subunit.

In terms of biological role, binds the 23S rRNA. The chain is Large ribosomal subunit protein bL31B from Hydrogenovibrio crunogenus (strain DSM 25203 / XCL-2) (Thiomicrospira crunogena).